We begin with the raw amino-acid sequence, 833 residues long: Phenylalanine--tRNA ligase beta subunit (833 aa).

The 116-residue stretch at 42 to 157 folds into the tRNA-binding domain; the sequence is ADLKGPLAVG…PEYEVGTDAI (116 aa). The region spanning 411–485 is the B5 domain; that stretch reads SAPHTITIPA…RLEGYENLPS (75 aa). Mg(2+) is bound by residues Asp463, Asp469, Glu472, and Glu473. Residues 739 to 832 enclose the FDX-ACB domain; sequence STFPVATQDV…AAERTGAALR (94 aa).

The protein belongs to the phenylalanyl-tRNA synthetase beta subunit family. Type 1 subfamily. Tetramer of two alpha and two beta subunits. It depends on Mg(2+) as a cofactor.

Its subcellular location is the cytoplasm. The enzyme catalyses tRNA(Phe) + L-phenylalanine + ATP = L-phenylalanyl-tRNA(Phe) + AMP + diphosphate + H(+). This chain is Phenylalanine--tRNA ligase beta subunit, found in Streptomyces avermitilis (strain ATCC 31267 / DSM 46492 / JCM 5070 / NBRC 14893 / NCIMB 12804 / NRRL 8165 / MA-4680).